The following is a 396-amino-acid chain: Elongation factor Tu 1 (396 aa).

The 197-residue stretch at 10 to 206 (KPHCNIGTIG…AVDAYIPQPE (197 aa)) folds into the tr-type G domain. Positions 19–26 (GHVDHGKT) are G1. 19 to 26 (GHVDHGKT) is a binding site for GTP. Residue T26 coordinates Mg(2+). A G2 region spans residues 60-64 (GITIS). Residues 81-84 (DCPG) are G3. GTP is bound by residues 81–85 (DCPGH) and 136–139 (NKCD). Positions 136-139 (NKCD) are G4. The segment at 174-176 (SAL) is G5.

Belongs to the TRAFAC class translation factor GTPase superfamily. Classic translation factor GTPase family. EF-Tu/EF-1A subfamily. Monomer.

The protein resides in the cytoplasm. The catalysed reaction is GTP + H2O = GDP + phosphate + H(+). Its function is as follows. GTP hydrolase that promotes the GTP-dependent binding of aminoacyl-tRNA to the A-site of ribosomes during protein biosynthesis. In Rhodopseudomonas palustris (strain BisB5), this protein is Elongation factor Tu 1.